The primary structure comprises 166 residues: NADPH-dependent 7-cyano-7-deazaguanine reductase (166 aa).

Cys-57 (thioimide intermediate) is an active-site residue. Catalysis depends on Asp-64, which acts as the Proton donor. Substrate is bound by residues 79–81 (VES) and 98–99 (HE).

This sequence belongs to the GTP cyclohydrolase I family. QueF type 1 subfamily.

It is found in the cytoplasm. It catalyses the reaction 7-aminomethyl-7-carbaguanine + 2 NADP(+) = 7-cyano-7-deazaguanine + 2 NADPH + 3 H(+). It functions in the pathway tRNA modification; tRNA-queuosine biosynthesis. Catalyzes the NADPH-dependent reduction of 7-cyano-7-deazaguanine (preQ0) to 7-aminomethyl-7-deazaguanine (preQ1). This chain is NADPH-dependent 7-cyano-7-deazaguanine reductase, found in Staphylococcus haemolyticus (strain JCSC1435).